The following is a 244-amino-acid chain: Orotidine 5'-phosphate decarboxylase (244 aa).

Residues Asp14, Lys36, 63–72 (DLKFHDIPNT), Thr127, Arg188, Gln197, Gly217, and Arg218 each bind substrate. Lys65 serves as the catalytic Proton donor.

The protein belongs to the OMP decarboxylase family. Type 1 subfamily. As to quaternary structure, homodimer.

It carries out the reaction orotidine 5'-phosphate + H(+) = UMP + CO2. Its pathway is pyrimidine metabolism; UMP biosynthesis via de novo pathway; UMP from orotate: step 2/2. Functionally, catalyzes the decarboxylation of orotidine 5'-monophosphate (OMP) to uridine 5'-monophosphate (UMP). The sequence is that of Orotidine 5'-phosphate decarboxylase from Syntrophotalea carbinolica (strain DSM 2380 / NBRC 103641 / GraBd1) (Pelobacter carbinolicus).